A 136-amino-acid chain; its full sequence is Sec-independent protein translocase protein TatB (136 aa).

The chain crosses the membrane as a helical span at residues 1-21; sequence MFDIGFWELVLISVIGLVVLG. The disordered stretch occupies residues 66–136; the sequence is ASKQGLSDLD…TTPPRQDKNE (71 aa). Composition is skewed to basic and acidic residues over residues 77–89 and 96–107; these read ELQK…KETA and YKKDIDDIKTSL. The span at 108-130 shows a compositional bias: polar residues; it reads DKNPSGTTQQENSILDSSKTTPP.

It belongs to the TatB family. As to quaternary structure, the Tat system comprises two distinct complexes: a TatABC complex, containing multiple copies of TatA, TatB and TatC subunits, and a separate TatA complex, containing only TatA subunits. Substrates initially bind to the TatABC complex, which probably triggers association of the separate TatA complex to form the active translocon.

The protein resides in the cell inner membrane. In terms of biological role, part of the twin-arginine translocation (Tat) system that transports large folded proteins containing a characteristic twin-arginine motif in their signal peptide across membranes. Together with TatC, TatB is part of a receptor directly interacting with Tat signal peptides. TatB may form an oligomeric binding site that transiently accommodates folded Tat precursor proteins before their translocation. This chain is Sec-independent protein translocase protein TatB, found in Psychromonas ingrahamii (strain DSM 17664 / CCUG 51855 / 37).